The following is a 143-amino-acid chain: Small ribosomal subunit protein bS6 (143 aa).

Residues 98-143 (TEQSLIMKSKDEKGDKPERSERRRRDDEEGEAPAANDNDGDNAEAA) form a disordered region. The segment covering 105-124 (KSKDEKGDKPERSERRRRDD) has biased composition (basic and acidic residues).

Belongs to the bacterial ribosomal protein bS6 family.

In terms of biological role, binds together with bS18 to 16S ribosomal RNA. This is Small ribosomal subunit protein bS6 from Xanthomonas euvesicatoria pv. vesicatoria (strain 85-10) (Xanthomonas campestris pv. vesicatoria).